A 90-amino-acid polypeptide reads, in one-letter code: MLDIINRLLGRENAGSRDIARERLRLVLIHDRASVSPNFLNALKEELIRVIREYMEIDEESLIVDLENEENSVALVANIPIRGFKRAANE.

It belongs to the MinE family.

In terms of biological role, prevents the cell division inhibition by proteins MinC and MinD at internal division sites while permitting inhibition at polar sites. This ensures cell division at the proper site by restricting the formation of a division septum at the midpoint of the long axis of the cell. This is Cell division topological specificity factor 2 from Syntrophomonas wolfei subsp. wolfei (strain DSM 2245B / Goettingen).